The primary structure comprises 138 residues: Large ribosomal subunit protein uL16 (138 aa).

A compositionally biased stretch (basic residues) spans M1 to Q17. Residues M1–S22 form a disordered region.

This sequence belongs to the universal ribosomal protein uL16 family. In terms of assembly, part of the 50S ribosomal subunit.

In terms of biological role, binds 23S rRNA and is also seen to make contacts with the A and possibly P site tRNAs. This is Large ribosomal subunit protein uL16 from Mycobacterium avium (strain 104).